The chain runs to 306 residues: UDP-3-O-acyl-N-acetylglucosamine deacetylase (306 aa).

Zn(2+) is bound by residues His-79, His-238, and Asp-242. The Proton donor role is filled by His-265.

The protein belongs to the LpxC family. Zn(2+) serves as cofactor.

It catalyses the reaction a UDP-3-O-[(3R)-3-hydroxyacyl]-N-acetyl-alpha-D-glucosamine + H2O = a UDP-3-O-[(3R)-3-hydroxyacyl]-alpha-D-glucosamine + acetate. Its pathway is glycolipid biosynthesis; lipid IV(A) biosynthesis; lipid IV(A) from (3R)-3-hydroxytetradecanoyl-[acyl-carrier-protein] and UDP-N-acetyl-alpha-D-glucosamine: step 2/6. Functionally, catalyzes the hydrolysis of UDP-3-O-myristoyl-N-acetylglucosamine to form UDP-3-O-myristoylglucosamine and acetate, the committed step in lipid A biosynthesis. This is UDP-3-O-acyl-N-acetylglucosamine deacetylase from Idiomarina loihiensis (strain ATCC BAA-735 / DSM 15497 / L2-TR).